Here is a 281-residue protein sequence, read N- to C-terminus: 2,3,4,5-tetrahydropyridine-2,6-dicarboxylate N-succinyltransferase (281 aa).

Arginine 108 and aspartate 145 together coordinate substrate.

The protein belongs to the transferase hexapeptide repeat family. As to quaternary structure, homotrimer.

Its subcellular location is the cytoplasm. The enzyme catalyses (S)-2,3,4,5-tetrahydrodipicolinate + succinyl-CoA + H2O = (S)-2-succinylamino-6-oxoheptanedioate + CoA. It participates in amino-acid biosynthesis; L-lysine biosynthesis via DAP pathway; LL-2,6-diaminopimelate from (S)-tetrahydrodipicolinate (succinylase route): step 1/3. This Parvibaculum lavamentivorans (strain DS-1 / DSM 13023 / NCIMB 13966) protein is 2,3,4,5-tetrahydropyridine-2,6-dicarboxylate N-succinyltransferase.